A 763-amino-acid polypeptide reads, in one-letter code: MNDSQNCLRQREENSHLNPGNDFGHHQGAECTINHNNMPHRNAYTESTNDTEAKSIVMCDDPNAYQISYTNNEPAGDGAIETTSILLSQPLPLRSNVMSVLVGIFVAVGGFLFGYDTGLINSITDMPYVKTYIAPNHSYFTTSQIAILVSFLSLGTFFGALIAPYISDSYGRKPTIMFSTAVIFSIGNSLQVASGGLVLLIVGRVISGIGIGIISAVVPLYQAEAAQKNLRGAIISSYQWAITIGLLVSSAVSQGTHSKNGPSSYRIPIGLQYVWSSILAVGMIFLPESPRYYVLKDELNKAAKSLSFLRGLPIEDPRLLEELVEIKATYDYEASFGPSTLLDCFKTSENRPKQILRIFTGIAIQAFQQASGINFIFYYGVNFFNNTGVDNSYLVSFISYAVNVAFSIPGMYLVDRIGRRPVLLAGGVIMAIANLVIAIVGVSEGKTVVASKIMIAFICLFIAAFSATWGGVVWVVSAELYPLGVRSKCTAICAAANWLVNFTCALITPYIVDVGSHTSSMGPKIFFIWGGLNVVAVIVVYFAVYETRGLTLEEIDELFRKAPNSVISSKWNKKIRKRCLAFPISQQIEMKTNIKNAGKLDNNNSPIVQDDSHNIIDVDGFLENQIQSNDHMIAADKGSGSLVNIIDTAPLTSTEFKPVEHPPVNYVDLGNGLGLNTYNRGPPSIISDSTDEFYEENDSSYYNNNTERNGANSVNTYMAQLINSSSTTSNDTSFSPSHNSNARTSSNWTSDLASKHSQYTSPQ.

Residues 1–28 are disordered; sequence MNDSQNCLRQREENSHLNPGNDFGHHQG. The Cytoplasmic segment spans residues 1-99; the sequence is MNDSQNCLRQ…PLPLRSNVMS (99 aa). The helical transmembrane segment at 100–120 threads the bilayer; the sequence is VLVGIFVAVGGFLFGYDTGLI. Topologically, residues 121–144 are extracellular; that stretch reads NSITDMPYVKTYIAPNHSYFTTSQ. N136 carries an N-linked (GlcNAc...) asparagine glycan. The helical transmembrane segment at 145–165 threads the bilayer; it reads IAILVSFLSLGTFFGALIAPY. Over 166–175 the chain is Cytoplasmic; sequence ISDSYGRKPT. The helical transmembrane segment at 176-196 threads the bilayer; the sequence is IMFSTAVIFSIGNSLQVASGG. Position 197 (L197) is a topological domain, extracellular. A helical membrane pass occupies residues 198-218; that stretch reads VLLIVGRVISGIGIGIISAVV. At 219-231 the chain is on the cytoplasmic side; that stretch reads PLYQAEAAQKNLR. Residues 232-252 traverse the membrane as a helical segment; the sequence is GAIISSYQWAITIGLLVSSAV. Residues 253-266 are Extracellular-facing; that stretch reads SQGTHSKNGPSSYR. The helical transmembrane segment at 267 to 287 threads the bilayer; the sequence is IPIGLQYVWSSILAVGMIFLP. Topologically, residues 288-357 are cytoplasmic; it reads ESPRYYVLKD…SENRPKQILR (70 aa). Residues 358 to 378 form a helical membrane-spanning segment; that stretch reads IFTGIAIQAFQQASGINFIFY. Over 379–393 the chain is Extracellular; that stretch reads YGVNFFNNTGVDNSY. An N-linked (GlcNAc...) asparagine glycan is attached at N385. The helical transmembrane segment at 394–414 threads the bilayer; that stretch reads LVSFISYAVNVAFSIPGMYLV. At 415-421 the chain is on the cytoplasmic side; that stretch reads DRIGRRP. The helical transmembrane segment at 422–442 threads the bilayer; sequence VLLAGGVIMAIANLVIAIVGV. Over 443 to 452 the chain is Extracellular; sequence SEGKTVVASK. The helical transmembrane segment at 453-473 threads the bilayer; sequence IMIAFICLFIAAFSATWGGVV. At 474–491 the chain is on the cytoplasmic side; sequence WVVSAELYPLGVRSKCTA. The helical transmembrane segment at 492-512 threads the bilayer; it reads ICAAANWLVNFTCALITPYIV. Residues 513 to 524 are Extracellular-facing; that stretch reads DVGSHTSSMGPK. The chain crosses the membrane as a helical span at residues 525-545; that stretch reads IFFIWGGLNVVAVIVVYFAVY. The Cytoplasmic segment spans residues 546–763; that stretch reads ETRGLTLEEI…SKHSQYTSPQ (218 aa). Residues 725–737 show a composition bias toward low complexity; the sequence is SSTTSNDTSFSPS. Positions 725–763 are disordered; the sequence is SSTTSNDTSFSPSHNSNARTSSNWTSDLASKHSQYTSPQ. Polar residues predominate over residues 738 to 763; it reads HNSNARTSSNWTSDLASKHSQYTSPQ.

This sequence belongs to the major facilitator superfamily. Sugar transporter (TC 2.A.1.1) family. As to quaternary structure, interacts with YCK1. Interacts with MTH1 and STD1. In terms of processing, phosphorylated in the C-terminal tail on Yck consensus sites in a yeast casein kinases YCK1 and YCK2 (Yck)-dependent manner. This phosphorylation is required for interaction with HXT corepressors MTH1 and STD1 and ultimately HXT expression.

Its subcellular location is the cell membrane. Functionally, low-affinity high glucose sensor that is part of the sensor/receptor-repressor (SSR) glucose-signaling pathway, which detects extracellular glucose and induces expression of glucose transporters that bring glucose into the cell. The transporter-like sensor generates an intracellular signal in the presence of high levels of glucose to promote high glucose-induced expression of HXT1. Binding of glucose to the RGT2 transmembrane domain activates a downstream signaling cascade, leading to phosphorylation of the RGT1 corepressors MTH1 and STD1, targeting them for SCF(Grr1)-dependent ubiquitination and degradation. Depletion of the corepressors robs RGT1 of its ability to repress expression of HXT genes, leading to accumulation of glucose transporters in the plasma membrane. Even though RGT2 is similar to glucose transporters, it appears to be unable to transport glucose. In Saccharomyces cerevisiae (strain ATCC 204508 / S288c) (Baker's yeast), this protein is High glucose sensor RGT2.